The chain runs to 91 residues: Large ribosomal subunit protein uL23 (91 aa).

This sequence belongs to the universal ribosomal protein uL23 family. As to quaternary structure, part of the 50S ribosomal subunit. Contacts protein L29.

Functionally, binds to 23S rRNA. One of the proteins that surrounds the polypeptide exit tunnel on the outside of the ribosome. The polypeptide is Large ribosomal subunit protein uL23 (Staphylothermus marinus (strain ATCC 43588 / DSM 3639 / JCM 9404 / F1)).